The following is a 576-amino-acid chain: Protein O-linked-mannose beta-1,4-N-acetylglucosaminyltransferase 2 (576 aa).

Over 1 to 4 (MNIS) the chain is Cytoplasmic. A helical; Signal-anchor for type II membrane protein membrane pass occupies residues 5-25 (AVFNALLVSIMAAVLWKHVKL). Residues 26–576 (LEQFYVIEEE…PFAEVLVCNT (551 aa)) are Lumenal-facing. N-linked (GlcNAc...) asparagine glycans are attached at residues Asn-98, Asn-275, Asn-335, Asn-451, Asn-539, and Asn-561. A Fibronectin type-III domain is found at 482–576 (RESKCQASAQ…PFAEVLVCNT (95 aa)).

This sequence belongs to the glycosyltransferase 61 family.

The protein localises to the endoplasmic reticulum membrane. It catalyses the reaction 3-O-(alpha-D-mannosyl)-L-threonyl-[protein] + UDP-N-acetyl-alpha-D-glucosamine = 3-O-(N-acetyl-beta-D-glucosaminyl-(1-&gt;4)-alpha-D-mannosyl)-L-threonyl-[protein] + UDP + H(+). It functions in the pathway protein modification; protein glycosylation. Its function is as follows. O-linked mannose beta-1,4-N-acetylglucosaminyltransferase that transfers UDP-N-acetyl-D-glucosamine to the 4-position of the mannose to generate N-acetyl-D-glucosamine-beta-1,4-O-D-mannosylprotein. Involved in the biosynthesis of the phosphorylated O-mannosyl trisaccharide (N-acetylgalactosamine-beta-3-N-acetylglucosamine-beta-4-(phosphate-6-)mannose), a carbohydrate structure present in alpha-dystroglycan (DAG1), which is required for binding laminin G-like domain-containing extracellular proteins with high affinity. The chain is Protein O-linked-mannose beta-1,4-N-acetylglucosaminyltransferase 2 (pomgnt2) from Xenopus tropicalis (Western clawed frog).